Consider the following 185-residue polypeptide: HTH-type transcriptional regulator SACOL2593 (185 aa).

In terms of domain architecture, HTH tetR-type spans 6–66 (KENRQRIEEI…YVIQRDLDIF (61 aa)). The segment at residues 29–48 (SMNRIAKELGIGMGTLYRHF) is a DNA-binding region (H-T-H motif).

In Staphylococcus aureus (strain COL), this protein is HTH-type transcriptional regulator SACOL2593.